The following is a 253-amino-acid chain: MVNGIYTKSFLERIQEELPEWQRIAFELLAETLGDDADTFPCIPGRQAFLTDQLRIAFAGDPRENRTAEELAPLLAEYGKISRDTGKYASLVVLFDTPEDLAEHYSIEAYEELFWRFLNRLSHQDEKEWPEDIPADPEHYKWEFCFDGEPYFILCATPGHEARRSRSFPFFMVTFQPRWVFDDLNGSTAFGRNMSRLIRSRLEAYDQAPIHPQLGWYGGKDNREWKQYFLRDDEKQVSKCPFSYLKNMFNKMK.

This sequence belongs to the DcsA family.

This is an uncharacterized protein from Bacillus subtilis (strain 168).